We begin with the raw amino-acid sequence, 500 residues long: Kynurenine 3-monooxygenase (500 aa).

The protein belongs to the aromatic-ring hydroxylase family. KMO subfamily. FAD is required as a cofactor.

The protein localises to the mitochondrion outer membrane. The catalysed reaction is L-kynurenine + NADPH + O2 + H(+) = 3-hydroxy-L-kynurenine + NADP(+) + H2O. The protein operates within cofactor biosynthesis; NAD(+) biosynthesis; quinolinate from L-kynurenine: step 1/3. Functionally, catalyzes the hydroxylation of L-kynurenine (L-Kyn) to form 3-hydroxy-L-kynurenine (L-3OHKyn). Required for synthesis of quinolinic acid. The chain is Kynurenine 3-monooxygenase (bna4) from Aspergillus terreus (strain NIH 2624 / FGSC A1156).